The following is a 355-amino-acid chain: F-box protein At1g31080 (355 aa).

The 46-residue stretch at 4-49 (GANSASIPNDLILEILSRLPAKSTGRFRCVSKLWGSMLCHSYFTEL) folds into the F-box domain. A compositionally biased stretch (polar residues) spans 306–320 (AGTSRSPPKQSTSTS). The tract at residues 306–333 (AGTSRSPPKQSTSTSSREDHEVRTLAHQ) is disordered. A compositionally biased stretch (basic and acidic residues) spans 321-333 (SREDHEVRTLAHQ).

In Arabidopsis thaliana (Mouse-ear cress), this protein is F-box protein At1g31080.